The following is a 599-amino-acid chain: Retrotransposon Gag-like protein 5 (599 aa).

Disordered stretches follow at residues 77-97 (DPTP…CWPP), 116-139 (DYTN…ELHS), and 377-450 (FPQE…EEDE). Acidic residues predominate over residues 78–90 (PTPEEEEEEEEEV). 2 stretches are compositionally biased toward acidic residues: residues 393–432 (DEME…EDKE) and 439–450 (DSDENKYEEEDE).

This Mus musculus (Mouse) protein is Retrotransposon Gag-like protein 5.